Here is a 252-residue protein sequence, read N- to C-terminus: MNVKVYNLDGSEKGDIELPAVFETEYRPDLIKRAVISSLTAKLQPKGCDAFAGYRTSAKSIGKGHGKARVRRTAQGAGAFVPQAVGGRRAHPPKVEKILFERINRKEKLKALASAIAASAIPEIVSARGHKIEGVPSLPLVVNADFESLAKTKEVLEVFKTLKLDADLARAKDGIKIKAGRAKLRGRKYKKPKSVLVVVGDACEAIAASRNLAGVDVITANDLSAIHIAPGTMAGRLTLWTENAIEKINGRF.

It belongs to the universal ribosomal protein uL4 family. Part of the 50S ribosomal subunit.

Functionally, one of the primary rRNA binding proteins, this protein initially binds near the 5'-end of the 23S rRNA. It is important during the early stages of 50S assembly. It makes multiple contacts with different domains of the 23S rRNA in the assembled 50S subunit and ribosome. Its function is as follows. Forms part of the polypeptide exit tunnel. The polypeptide is Large ribosomal subunit protein uL4 (Methanococcus maripaludis (strain C7 / ATCC BAA-1331)).